The chain runs to 20 residues: FLGKKVLKAVGKQAAKKQME.

Residue E20 is modified to Glutamic acid 1-amide.

As to expression, expressed by the venom gland.

It is found in the secreted. This chain is Short cationic peptide-3a, found in Cupiennius salei (American wandering spider).